A 90-amino-acid polypeptide reads, in one-letter code: Acylphosphatase (90 aa).

The Acylphosphatase-like domain occupies Arg4–Thr90. Catalysis depends on residues Arg19 and Asn37.

Belongs to the acylphosphatase family.

The catalysed reaction is an acyl phosphate + H2O = a carboxylate + phosphate + H(+). This chain is Acylphosphatase (acyP), found in Synechococcus sp. (strain CC9311).